We begin with the raw amino-acid sequence, 347 residues long: Protein RecA (347 aa).

80-87 (GPESSGKT) is an ATP binding site.

This sequence belongs to the RecA family.

It localises to the cytoplasm. In terms of biological role, can catalyze the hydrolysis of ATP in the presence of single-stranded DNA, the ATP-dependent uptake of single-stranded DNA by duplex DNA, and the ATP-dependent hybridization of homologous single-stranded DNAs. It interacts with LexA causing its activation and leading to its autocatalytic cleavage. The polypeptide is Protein RecA (Chlorobaculum parvum (strain DSM 263 / NCIMB 8327) (Chlorobium vibrioforme subsp. thiosulfatophilum)).